Reading from the N-terminus, the 464-residue chain is UDP-N-acetylmuramate--L-alanine ligase (464 aa).

G117–T123 lines the ATP pocket.

This sequence belongs to the MurCDEF family.

It localises to the cytoplasm. It carries out the reaction UDP-N-acetyl-alpha-D-muramate + L-alanine + ATP = UDP-N-acetyl-alpha-D-muramoyl-L-alanine + ADP + phosphate + H(+). Its pathway is cell wall biogenesis; peptidoglycan biosynthesis. Its function is as follows. Cell wall formation. The chain is UDP-N-acetylmuramate--L-alanine ligase from Streptomyces avermitilis (strain ATCC 31267 / DSM 46492 / JCM 5070 / NBRC 14893 / NCIMB 12804 / NRRL 8165 / MA-4680).